Here is a 460-residue protein sequence, read N- to C-terminus: ATP synthase subunit beta (460 aa).

An ATP-binding site is contributed by 150–157 (GGAGVGKT).

This sequence belongs to the ATPase alpha/beta chains family. As to quaternary structure, F-type ATPases have 2 components, CF(1) - the catalytic core - and CF(0) - the membrane proton channel. CF(1) has five subunits: alpha(3), beta(3), gamma(1), delta(1), epsilon(1). CF(0) has three main subunits: a(1), b(2) and c(9-12). The alpha and beta chains form an alternating ring which encloses part of the gamma chain. CF(1) is attached to CF(0) by a central stalk formed by the gamma and epsilon chains, while a peripheral stalk is formed by the delta and b chains.

It is found in the cell inner membrane. The catalysed reaction is ATP + H2O + 4 H(+)(in) = ADP + phosphate + 5 H(+)(out). Functionally, produces ATP from ADP in the presence of a proton gradient across the membrane. The catalytic sites are hosted primarily by the beta subunits. In Klebsiella pneumoniae subsp. pneumoniae (strain ATCC 700721 / MGH 78578), this protein is ATP synthase subunit beta.